The sequence spans 55 residues: Large ribosomal subunit protein bL33 (55 aa).

Belongs to the bacterial ribosomal protein bL33 family.

The sequence is that of Large ribosomal subunit protein bL33 from Campylobacter fetus subsp. fetus (strain 82-40).